We begin with the raw amino-acid sequence, 429 residues long: MKKKPFYKVLYVQVIFAIIVGVILGHFYPALATDMKPLGDGFIKLIKMVIGPIIFCTVVTGIAGMEDMKKVGRVGGKALLYFEVVSTFALLLGLAATHILRPGVGFNIDPATLDGKAVASYAAKAHGQSTVDFLLHIIPNTMVDAFAQGEILQILLIALLFGSVLAHLGERGKVVTDFIDGLTRVLFGIVHIVTKLAPIGAFGAMAFTIGKYGVGSLVPLLKLIGTFYLTSIVFVLVVLGTIARVTGFSIIRFVSYIKEELLIVLGTSSSEAALPQLMEKLEKAGCSRSVVGLVVPTGYSFNLDGTNIYMTMAVLFIAQATNIELTWMQQLTLLAVAMLTSKGASGVTGAGFITLAATLAVVPTIPLSGMVLILGIDRFMSECRALTNIVGNGVATVVVSAWEKELDRNKLRQALAGGGEVKTTEAAGV.

The next 8 membrane-spanning stretches (helical) occupy residues 9–29 (VLYV…HFYP), 45–65 (LIKM…IAGM), 79–99 (LLYF…ATHI), 149–169 (GEIL…AHLG), 185–205 (VLFG…FGAM), 223–243 (LIGT…GTIA), 308–328 (IYMT…LTWM), and 356–376 (AATL…ILGI).

The protein belongs to the dicarboxylate/amino acid:cation symporter (DAACS) (TC 2.A.23) family.

The protein localises to the cell inner membrane. Responsible for the transport of dicarboxylates such as succinate, fumarate, and malate from the periplasm across the membrane. The chain is C4-dicarboxylate transport protein from Burkholderia ambifaria (strain MC40-6).